Reading from the N-terminus, the 225-residue chain is Large ribosomal subunit protein uL1 (225 aa).

It belongs to the universal ribosomal protein uL1 family. Part of the 50S ribosomal subunit.

In terms of biological role, binds directly to 23S rRNA. Probably involved in E site tRNA release. Its function is as follows. Protein L1 is also a translational repressor protein, it controls the translation of its operon by binding to its mRNA. The protein is Large ribosomal subunit protein uL1 of Thermofilum pendens (strain DSM 2475 / Hrk 5).